The following is a 163-amino-acid chain: MTTFLSDSEHPQDVKAPPKSARRRAREFVLQGLYQWRVGGADEASIEAYAPEMEGFAKADREFFVGTLRGVISQQEKLIEQVSTHIDRPFNELSPVEACILMLGSFEMLNHAETPYRVIINEAIELTKAFGGTDGHKYVNGVLDKVAAILRPDEVAARKQAKK.

Residues 1–21 (MTTFLSDSEHPQDVKAPPKSA) are disordered.

This sequence belongs to the NusB family.

Involved in transcription antitermination. Required for transcription of ribosomal RNA (rRNA) genes. Binds specifically to the boxA antiterminator sequence of the ribosomal RNA (rrn) operons. This chain is Transcription antitermination protein NusB, found in Dechloromonas aromatica (strain RCB).